The sequence spans 510 residues: NAD(P)H-quinone oxidoreductase subunit 2 A, chloroplastic (510 aa).

13 helical membrane-spanning segments follow: residues 24-44, 57-77, 99-119, 124-144, 149-169, 183-203, 227-247, 295-315, 323-343, 354-374, 395-415, 418-438, and 484-504; these read LLLFDGSFIFPECILIFGLIL, IPWLYFISSTSLVMSITALLF, IFQFLILLCSTLCIPLSVEYI, MAITEFLLFVLTATLGGMFLC, LITIFVAPECFSLCSYLLSGY, YLLMGGASSSILVHGFSWLYG, PGISIALIFITVGIGFKLSPA, WHLLLEILAILSMILGNLIAI, MLAYSSIGQIGYVIIGIIVGD, YMLFYISMNLGTFACIVSFGL, ALSLALCLLSLGGLPPLAGFF, LHLFWCGWQAGLYFLVSIGLL, and MIVCVIASTIPGISMNPIIAI.

This sequence belongs to the complex I subunit 2 family. NDH is composed of at least 16 different subunits, 5 of which are encoded in the nucleus.

It is found in the plastid. Its subcellular location is the chloroplast thylakoid membrane. The enzyme catalyses a plastoquinone + NADH + (n+1) H(+)(in) = a plastoquinol + NAD(+) + n H(+)(out). The catalysed reaction is a plastoquinone + NADPH + (n+1) H(+)(in) = a plastoquinol + NADP(+) + n H(+)(out). Its function is as follows. NDH shuttles electrons from NAD(P)H:plastoquinone, via FMN and iron-sulfur (Fe-S) centers, to quinones in the photosynthetic chain and possibly in a chloroplast respiratory chain. The immediate electron acceptor for the enzyme in this species is believed to be plastoquinone. Couples the redox reaction to proton translocation, and thus conserves the redox energy in a proton gradient. This is NAD(P)H-quinone oxidoreductase subunit 2 A, chloroplastic from Vitis vinifera (Grape).